The following is a 271-amino-acid chain: MSGFLLALRTTFGFLSTIPVGMSMEGLDELVKRSYLQTFAGIVLGSMIGIFAYLTESFLPSTISAVLIMVFIYYITGLNHLDGLGDFGDGATAHGSLEKKVNALKDMSLGIGGVSYTVLALIALYASISSLQAEVLFFSDNAALIIAISLLIAEIGAKQAMLTVAAFGKPIHEGLGSMIINNTTFPRYAVSFVLGALVCVLAFGTLGIIGYISAIVTAFVILNISIRHFKGINGDCIGTSNEIARIIVLMVLTVAITAVNNGYGGLFWTPL.

Transmembrane regions (helical) follow at residues 4-24, 35-55, 58-78, 108-128, 135-155, 192-212, and 246-266; these read FLLA…GMSM, YLQT…AYLT, FLPS…ITGL, SLGI…YASI, VLFF…IAEI, FVLG…IGYI, and IIVL…YGGL.

It belongs to the CobS family. The cofactor is Mg(2+).

The protein localises to the cell membrane. The enzyme catalyses alpha-ribazole + adenosylcob(III)inamide-GDP = adenosylcob(III)alamin + GMP + H(+). The catalysed reaction is alpha-ribazole 5'-phosphate + adenosylcob(III)inamide-GDP = adenosylcob(III)alamin 5'-phosphate + GMP + H(+). Its pathway is cofactor biosynthesis; adenosylcobalamin biosynthesis; adenosylcobalamin from cob(II)yrinate a,c-diamide: step 7/7. In terms of biological role, joins adenosylcobinamide-GDP and alpha-ribazole to generate adenosylcobalamin (Ado-cobalamin). Also synthesizes adenosylcobalamin 5'-phosphate from adenosylcobinamide-GDP and alpha-ribazole 5'-phosphate. In Methanococcoides burtonii (strain DSM 6242 / NBRC 107633 / OCM 468 / ACE-M), this protein is Adenosylcobinamide-GDP ribazoletransferase.